Here is a 62-residue protein sequence, read N- to C-terminus: Large ribosomal subunit protein bL32 (62 aa).

Residues 1 to 19 (MAVPKRKTSKTRRDKRRAS) are compositionally biased toward basic residues. Positions 1 to 20 (MAVPKRKTSKTRRDKRRASS) are disordered.

This sequence belongs to the bacterial ribosomal protein bL32 family.

This is Large ribosomal subunit protein bL32 from Finegoldia magna (strain ATCC 29328 / DSM 20472 / WAL 2508) (Peptostreptococcus magnus).